Consider the following 1392-residue polypeptide: Leucine-rich PPR motif-containing protein, mitochondrial (1392 aa).

The transit peptide at 1-77 (MSALLRPARW…LPEEPAPVRR (77 aa)) directs the protein to the mitochondrion. PPR repeat units lie at residues 125–159 (LLRS…GTVY), 160–194 (DVSH…NIQP), 195–229 (NRVT…DLPI), 230–264 (TEAV…GIEP), 265–299 (GPDT…DHYF), 300–334 (MDRD…RRSI), 402–436 (HSSS…GFPI), 437–471 (RTHY…GVDP), 677–708 (VGDP…ESDM), 709–745 (VIGG…SAVL), 746–783 (DTAK…IKDA), 784–820 (AVLS…AKPS), 821–856 (SNIS…VLPR), and 953–987 (RDQM…NLIP). Residues Lys151 and Lys186 each carry the N6-acetyllysine modification. Lys291 is subject to N6-acetyllysine. Lys462 carries the N6-acetyllysine modification. N6-acetyllysine is present on Lys749. Phosphoserine occurs at positions 1025, 1026, and 1028. 6 PPR repeats span residues 1030-1064 (GDTV…DVVF), 1065-1101 (SSEA…GFTL), 1102-1136 (NGAA…EQVP), 1137-1173 (SELA…IELS), 1174-1208 (RMVF…ENQT), and 1315-1349 (NDRV…NMKL). Residue Ser1137 is modified to Phosphoserine.

As to quaternary structure, component of mRNP complexes associated with HNRPA1. Component of the complex, at least composed of LRPPRC, BECN1 and BCL2; the interactions prevent BECN1 from forming an autophagy-inducing complex with PIK3C3. Interacts with CECR2, HEBP2, MAP1S, UXT, PPARGC1A and FOXO1. Interacts (via N-terminus) with EIF4E; the interaction promotes association of EIF4E with 4ESE-containing mRNAs. Interacts with exportin XPO1/CRM1; interacts both alone and in complex with EIF4E and 4ESE-containing mRNAs to form an EIF4E-dependent mRNA export complex. Interacts with importin IPO8; the interaction occurs when LRPPRC is in its RNA-free form and returns LRPPRC to the nucleus for further export rounds. Interacts with BECN1. In terms of tissue distribution, widely expressed. Expressed in liver, brain and a subset of small diameter sensory neurons in the dorsal root ganglion (at protein level).

The protein localises to the mitochondrion. Its subcellular location is the nucleus. The protein resides in the nucleoplasm. It localises to the nucleus inner membrane. It is found in the nucleus outer membrane. Its function is as follows. May play a role in RNA metabolism in both nuclei and mitochondria. In the nucleus binds to HNRPA1-associated poly(A) mRNAs and is part of nmRNP complexes at late stages of mRNA maturation which are possibly associated with nuclear mRNA export. Positively modulates nuclear export of mRNAs containing the EIF4E sensitivity element (4ESE) by binding simultaneously to both EIF4E and the 4ESE and acting as a platform for assembly for the RNA export complex. Also binds to exportin XPO1/CRM1 to engage the nuclear pore and traffic the bound mRNAs to the cytoplasm. May bind mature mRNA in the nucleus outer membrane. In mitochondria binds to poly(A) mRNA. Plays a role in translation or stability of mitochondrially encoded cytochrome c oxidase (COX) subunits. May be involved in transcription regulation. Cooperates with PPARGC1A to regulate certain mitochondrially encoded genes and gluconeogenic genes and may regulate docking of PPARGC1A to transcription factors. Seems to be involved in the transcription regulation of the multidrug-related genes MDR1 and MVP. Part of a nuclear factor that binds to the invMED1 element of MDR1 and MVP gene promoters. Binds single-stranded DNA. Required for maintaining mitochondrial potential. Suppresses the initiation of basal levels of autophagy and mitophagy by sustaining BCL2 levels. The sequence is that of Leucine-rich PPR motif-containing protein, mitochondrial (Lrpprc) from Rattus norvegicus (Rat).